The primary structure comprises 72 residues: Conotoxin VnMKLT2-0221 (72 aa).

Residues 1 to 22 (MKLTCVLIVAVLFLTACQLTTA) form the signal peptide. Residues 23 to 45 (ASYARSERQHPDLGSSDQNSKLT) constitute a propeptide that is removed on maturation. A disordered region spans residues 26-45 (ARSERQHPDLGSSDQNSKLT). 3 disulfides stabilise this stretch: Cys-48/Cys-62, Cys-55/Cys-66, and Cys-61/Cys-71.

Belongs to the conotoxin O1 superfamily. As to expression, expressed by the venom duct.

It localises to the secreted. The chain is Conotoxin VnMKLT2-0221 from Conus ventricosus (Mediterranean cone).